Here is a 345-residue protein sequence, read N- to C-terminus: Probable dual-specificity RNA methyltransferase RlmN (345 aa).

Catalysis depends on E90, which acts as the Proton acceptor. Residues 96-327 (QSYGNSVCVT…CIVRREFGHD (232 aa)) form the Radical SAM core domain. A disulfide bridge connects residues C103 and C332. Residues C110, C114, and C117 each contribute to the [4Fe-4S] cluster site. Residues 160 to 161 (GE), S192, 215 to 217 (SLH), and N291 contribute to the S-adenosyl-L-methionine site. C332 (S-methylcysteine intermediate) is an active-site residue.

This sequence belongs to the radical SAM superfamily. RlmN family. [4Fe-4S] cluster serves as cofactor.

It localises to the cytoplasm. The enzyme catalyses adenosine(2503) in 23S rRNA + 2 reduced [2Fe-2S]-[ferredoxin] + 2 S-adenosyl-L-methionine = 2-methyladenosine(2503) in 23S rRNA + 5'-deoxyadenosine + L-methionine + 2 oxidized [2Fe-2S]-[ferredoxin] + S-adenosyl-L-homocysteine. It catalyses the reaction adenosine(37) in tRNA + 2 reduced [2Fe-2S]-[ferredoxin] + 2 S-adenosyl-L-methionine = 2-methyladenosine(37) in tRNA + 5'-deoxyadenosine + L-methionine + 2 oxidized [2Fe-2S]-[ferredoxin] + S-adenosyl-L-homocysteine. Its function is as follows. Specifically methylates position 2 of adenine 2503 in 23S rRNA and position 2 of adenine 37 in tRNAs. This chain is Probable dual-specificity RNA methyltransferase RlmN, found in Spiroplasma citri.